The sequence spans 157 residues: Capsid protein (157 aa).

Ala2 bears the N-acetylalanine; by host mark.

The protein belongs to the virgaviridae capsid protein family.

Its subcellular location is the virion. Capsid protein self-assembles to form rod-shaped virions about 18 nm in diameter with a central canal enclosing the viral genomic RNA. In Vicia faba (Broad bean), this protein is Capsid protein (CP).